The primary structure comprises 412 residues: Isovaleryl-CoA dehydrogenase, mitochondrial (412 aa).

The N-terminal 25 residues, 1 to 25 (MHKLFVARSVKSALFRIKNHQKPQF), are a transit peptide targeting the mitochondrion. Residues 154-163 (LAMSEPNAGS) and 187-189 (WCT) each bind FAD. Position 163 (S163) interacts with substrate. Residues 209–210 (SK), Y264, and 271–274 (DLER) contribute to the substrate site. E273 serves as the catalytic Proton acceptor. FAD contacts are provided by residues R299, Q310, and 367–371 (QCLGG). 394–395 (AG) lines the substrate pocket. Residue 396–398 (TSE) coordinates FAD.

The protein belongs to the acyl-CoA dehydrogenase family. As to quaternary structure, homotetramer. FAD is required as a cofactor. Expressed in flowers and tubers.

It localises to the mitochondrion. It carries out the reaction 3-methylbutanoyl-CoA + oxidized [electron-transfer flavoprotein] + H(+) = 3-methylbut-2-enoyl-CoA + reduced [electron-transfer flavoprotein]. Its pathway is amino-acid degradation; L-leucine degradation; (S)-3-hydroxy-3-methylglutaryl-CoA from 3-isovaleryl-CoA: step 1/3. Involved in the catabolism of amino acids. Uses isovaleryl-CoA as substrate. Minor activity detected with 2-methylpalmitoyl-CoA or 2-methylbutanoyl-CoA, but no activity with short- and medium-straight chain acyl-CoA esters or with 2-methylhexanoyl-CoA. This is Isovaleryl-CoA dehydrogenase, mitochondrial (IVD) from Solanum tuberosum (Potato).